The primary structure comprises 73 residues: MAVPKKRTSASKKRIRKNSWKGKGYGTALKAFSLGKSLSTGNSKSFFVPKNSLKVFKRIIKNWNNLNRLGSKN.

Belongs to the bacterial ribosomal protein bL32 family.

It is found in the plastid. It localises to the chloroplast. In Jasminum nudiflorum (Winter jasmine), this protein is Large ribosomal subunit protein bL32c.